A 44-amino-acid polypeptide reads, in one-letter code: Mu-conotoxin-like Cal 12.1.3b (44 aa).

4 cysteine pairs are disulfide-bonded: Cys-3–Cys-16, Cys-11–Cys-28, Cys-18–Cys-33, and Cys-27–Cys-38. Residue Pro-23 is modified to 4-hydroxyproline. Residues Trp-36 and Trp-37 each carry the 6'-bromotryptophan modification. A 4-hydroxyproline modification is found at Pro-39. Trp-43 carries the 6'-bromotryptophan modification.

As to expression, expressed by the venom duct.

It is found in the secreted. Mu-conotoxins block voltage-gated sodium channels. This toxin reversibly blocks voltage-gated sodium channel in cephalopods, with no alteration in the voltage dependence of sodium conductance or on the kinetics of inactivation. This chain is Mu-conotoxin-like Cal 12.1.3b, found in Californiconus californicus (California cone).